We begin with the raw amino-acid sequence, 188 residues long: Pro-adrenomedullin (188 aa).

The signal sequence occupies residues 1–21 (MKLVPVALLYLGSLAFLGADT). Arg-41 is subject to Arginine amide. The propeptide occupies 45 to 92 (ELRVSSSYPTGLAEVKAGPAQTLIRTQDVKGASRNPQTSGPDAARIRV). A disulfide bond links Cys-110 and Cys-115. The segment at 131–176 (DKDGVAPRSKISPQGYGRRRRRSLPEPGLRRTLLFPEPRPGGAPAP) is disordered. Tyr-146 carries the post-translational modification Tyrosine amide. A propeptide spans 153 to 188 (SLPEPGLRRTLLFPEPRPGGAPAPRAHQVLANLLKM) (preproAM C-terminal fragment).

It belongs to the adrenomedullin family.

It localises to the secreted. Functionally, adrenomedullin/ADM and proadrenomedullin N-20 terminal peptide/PAMP are peptide hormones that act as potent hypotensive and vasodilatator agents. Numerous actions have been reported most related to the physiologic control of fluid and electrolyte homeostasis. ADM function is mediated by the CALCRL-RAMP2 and CALCRL-RAMP3 receptor complexes with ADM showing the highest potency for the CALCRL-RAMP2 complex. This Canis lupus familiaris (Dog) protein is Pro-adrenomedullin (ADM).